Here is a 197-residue protein sequence, read N- to C-terminus: GTP cyclohydrolase-2 (197 aa).

A GTP-binding site is contributed by 49–53; it reads RVHSE. Positions 54, 65, and 67 each coordinate Zn(2+). Residues Gln70, 92 to 94, and Thr114 each bind GTP; that span reads EGR. Catalysis depends on Asp126, which acts as the Proton acceptor. Catalysis depends on Arg128, which acts as the Nucleophile. Residues Thr149 and Lys154 each contribute to the GTP site.

This sequence belongs to the GTP cyclohydrolase II family. As to quaternary structure, homodimer. The cofactor is Zn(2+).

It catalyses the reaction GTP + 4 H2O = 2,5-diamino-6-hydroxy-4-(5-phosphoribosylamino)-pyrimidine + formate + 2 phosphate + 3 H(+). It participates in cofactor biosynthesis; riboflavin biosynthesis; 5-amino-6-(D-ribitylamino)uracil from GTP: step 1/4. Functionally, catalyzes the conversion of GTP to 2,5-diamino-6-ribosylamino-4(3H)-pyrimidinone 5'-phosphate (DARP), formate and pyrophosphate. This chain is GTP cyclohydrolase-2, found in Cronobacter sakazakii (strain ATCC BAA-894) (Enterobacter sakazakii).